The sequence spans 211 residues: Protein-methionine-sulfoxide reductase heme-binding subunit MsrQ (211 aa).

A run of 6 helical transmembrane segments spans residues 8–28, 54–74, 82–102, 116–136, 153–173, and 178–198; these read VIWL…WLVW, FLLA…PLLI, LWCF…ELGV, PYLT…FTST, FVYL…KIIS, and IYAG…LSLF.

It belongs to the MsrQ family. Heterodimer of a catalytic subunit (MsrP) and a heme-binding subunit (MsrQ). The cofactor is FMN. Requires heme b as cofactor.

It is found in the cell inner membrane. In terms of biological role, part of the MsrPQ system that repairs oxidized periplasmic proteins containing methionine sulfoxide residues (Met-O), using respiratory chain electrons. Thus protects these proteins from oxidative-stress damage caused by reactive species of oxygen and chlorine generated by the host defense mechanisms. MsrPQ is essential for the maintenance of envelope integrity under bleach stress, rescuing a wide series of structurally unrelated periplasmic proteins from methionine oxidation, including the primary periplasmic chaperone SurA and the lipoprotein Pal. MsrQ provides electrons for reduction to the reductase catalytic subunit MsrP, using the quinone pool of the respiratory chain. The sequence is that of Protein-methionine-sulfoxide reductase heme-binding subunit MsrQ from Shigella flexneri.